Reading from the N-terminus, the 553-residue chain is Zinc finger protein 324A (553 aa).

Residues 1 to 72 (MAFEDVAVYF…SGTDTTLSRT (72 aa)) enclose the KRAB domain. The Nuclear localization signal signature appears at 130–135 (PSRERK). Positions 186–221 (GRQPRTPERQKPCAQEVPGRTFGSAQDLEAAGGRGH) are disordered. 9 consecutive C2H2-type zinc fingers follow at residues 257 to 279 (FECRACSKVFVKSSDLLKHLRTH), 285 to 307 (YECAQCGKAFSQTSHLTQHQRIH), 313 to 335 (YACPVCGKAFRHSSSLVRHQRIH), 341 to 363 (FRCSECGKAFSHGSNLSQHRKIH), 369 to 391 (YACAQCGRRFCRNSHLIQHERTH), 397 to 419 (FVCALCGAAFSQGSSLFKHQRVH), 425 to 447 (FACPQCGRAFSHSSNLTQHQLLH), 453 to 475 (FRCVDCGKAFAKGAVLLSHRRIH), and 481 to 503 (FVCTQCGRAFRERPALFHHQRIH). The interval 502–553 (IHTGEKTVRRSRASLHPQARSVAGASSEGAPAKETEPTPASGPAAVSQPAEV) is disordered.

It belongs to the krueppel C2H2-type zinc-finger protein family. Expressed at high levels in the spleen, thymus, and PBMC, at low levels in the prostate, ovary, small intestine, colon (mucosal lining), placenta, lung, and pancreas, and very weakly expressed in the liver and kidney.

The protein localises to the nucleus. In terms of biological role, may be involved in transcriptional regulation. May be involved in regulation of cell proliferation. In Homo sapiens (Human), this protein is Zinc finger protein 324A (ZNF324).